Here is a 391-residue protein sequence, read N- to C-terminus: Casein kinase II subunit alpha (391 aa).

The tract at residues 36-41 (QDDYQL) is interaction with beta subunit. Residues 39–324 (YQLVRKLGRG…AREAMEHPYF (286 aa)) enclose the Protein kinase domain. Residues 45-53 (LGRGKYSEV) and Lys68 contribute to the ATP site. Asp156 (proton acceptor) is an active-site residue. Residues Thr344 and Thr360 each carry the phosphothreonine; by CDK1 modification. Phosphoserine; by CDK1 is present on residues Ser362 and Ser370.

This sequence belongs to the protein kinase superfamily. Ser/Thr protein kinase family. CK2 subfamily. As to quaternary structure, heterotetramer composed of two catalytic subunits (alpha chain and/or alpha' chain) and two regulatory subunits (beta chains). The tetramer can exist as a combination of 2 alpha/2 beta, 2 alpha'/2 beta or 1 alpha/1 alpha'/2 beta subunits. Also part of a CK2-SPT16-SSRP1 complex composed of SSRP1, SUPT16H, CSNK2A1, CSNK2A2 and CSNK2B, which forms following UV irradiation. Interacts with RNPS1. Interacts with SNAI1. Interacts with PML. Interacts with CCAR2. Interacts with HIRIP3. Post-translationally, phosphorylated at Thr-344, Thr-360, Ser-362 and Ser-370 by CDK1 in prophase and metaphase and dephosphorylated during anaphase. Phosphorylation does not directly affect casein kinase 2 activity, but may contribute to its regulation by forming binding sites for interacting proteins and/or targeting it to different compartments.

It is found in the nucleus. The enzyme catalyses L-seryl-[protein] + ATP = O-phospho-L-seryl-[protein] + ADP + H(+). It catalyses the reaction L-threonyl-[protein] + ATP = O-phospho-L-threonyl-[protein] + ADP + H(+). Its activity is regulated as follows. Constitutively active protein kinase whose activity is not directly affected by phosphorylation. Seems to be regulated by level of expression and localization. In terms of biological role, catalytic subunit of a constitutively active serine/threonine-protein kinase complex that phosphorylates a large number of substrates containing acidic residues C-terminal to the phosphorylated serine or threonine. Regulates numerous cellular processes, such as cell cycle progression, apoptosis and transcription, as well as viral infection. May act as a regulatory node which integrates and coordinates numerous signals leading to an appropriate cellular response. During mitosis, functions as a component of the p53/TP53-dependent spindle assembly checkpoint (SAC) that maintains cyclin-B-CDK1 activity and G2 arrest in response to spindle damage. Also required for p53/TP53-mediated apoptosis, phosphorylating 'Ser-392' of p53/TP53 following UV irradiation. Phosphorylates a number of DNA repair proteins in response to DNA damage, such as MDC1, MRE11, RAD9A, RAD51 and HTATSF1, promoting their recruitment to DNA damage sites. Can also negatively regulate apoptosis. Phosphorylates the caspases CASP9 and CASP2 and the apoptotic regulator NOL3. Phosphorylation protects CASP9 from cleavage and activation by CASP8, and inhibits the dimerization of CASP2 and activation of CASP8. Phosphorylates YY1, protecting YY1 from cleavage by CASP7 during apoptosis. Regulates transcription by direct phosphorylation of RNA polymerases I, II, III and IV. Also phosphorylates and regulates numerous transcription factors including NF-kappa-B, STAT1, CREB1, IRF1, IRF2, ATF1, ATF4, SRF, MAX, JUN, FOS, MYC and MYB. Phosphorylates Hsp90 and its co-chaperones FKBP4 and CDC37, which is essential for chaperone function. Mediates sequential phosphorylation of FNIP1, promoting its gradual interaction with Hsp90, leading to activate both kinase and non-kinase client proteins of Hsp90. Regulates Wnt signaling by phosphorylating CTNNB1 and the transcription factor LEF1. Acts as an ectokinase that phosphorylates several extracellular proteins. Phosphorylates PML at 'Ser-565' and primes it for ubiquitin-mediated degradation. Plays an important role in the circadian clock function by phosphorylating BMAL1 at 'Ser-90' which is pivotal for its interaction with CLOCK and which controls CLOCK nuclear entry. Phosphorylates FMR1, promoting FMR1-dependent formation of a membraneless compartment. May phosphorylate histone H2A on 'Ser-1'. This Oryctolagus cuniculus (Rabbit) protein is Casein kinase II subunit alpha (CSNK2A1).